Reading from the N-terminus, the 905-residue chain is V-type proton ATPase 116 kDa subunit a 1 (905 aa).

At 1-424 (MGDYVTPGEE…DAYGIATYRE (424 aa)) the chain is on the cytoplasmic side. The chain crosses the membrane as a helical span at residues 425–443 (INPAPYTMISFPFLFAVMF). The Lumenal portion of the chain corresponds to 444–445 (GD). The chain crosses the membrane as a helical span at residues 446–462 (MGHGAIMLLAALFFILK). Residues 463–477 (EKQLEAARIKDEIFQ) lie on the Cytoplasmic side of the membrane. A helical membrane pass occupies residues 478–507 (TFFGGRYVIFLMGAFSIYTGFMYNDVFSKS). Residues 508 to 572 (INTFGSSWQN…EGNKLSFLNS (65 aa)) are Lumenal-facing. A helical membrane pass occupies residues 573–592 (MKMKMSVLFGIAQMTFGVLL). Over 593 to 610 (SYQNFIYFKSDLDIKYMF) the chain is Cytoplasmic. A helical membrane pass occupies residues 611-631 (IPQMIFLSSIFIYLCIQILSK). Topologically, residues 632-699 (WLFFGAVGGT…YPGQATIEII (68 aa)) are lumenal. The chain crosses the membrane as a helical span at residues 700-719 (LVVLALVQVPIMLFAKPYFL). Residues 720-788 (YRRDKQQSRY…DVMVYQAIHT (69 aa)) are Cytoplasmic-facing. The helical transmembrane segment at 789–813 (IEFVLGCVSHTASYLRLWALSLAHA) threads the bilayer. The Lumenal segment spans residues 814-834 (QLSDVLWTMVFRNAFVLDGYT). Residues 835–873 (GAIATYILFFIFGSLSVFILVLMEGLSAFLHALRLHWVE) form a helical membrane-spanning segment. Residues 874 to 905 (FQSKFYGGLGYEFAPFSFEKILAEEREAEENL) are Cytoplasmic-facing.

This sequence belongs to the V-ATPase 116 kDa subunit family. V-ATPase is a heteromultimeric enzyme made up of two complexes: the ATP-hydrolytic V1 complex and the proton translocation V0 complex. The V1 complex consists of three catalytic AB heterodimers that form a heterohexamer, three peripheral stalks each consisting of EG heterodimers, one central rotor including subunits D and F, and the regulatory subunits C and H. The proton translocation complex V0 consists of the proton transport subunit a, a ring of proteolipid subunits c9c'', rotary subunit d, subunits e and f, and the accessory subunits vah-19/Ac45 and vah-20/PRR. Interacts with V-type proton ATPase subunit C vha-11. As to expression, ubiquitous expression in embryos. Expressed in gonads, intestine, neurons in the head and motoneurons in the ventral cord of larvae and adults. Expressed in the vulvae and spermathecal uterine valves. Weakly expressed in the pharynx. In terms of tissue distribution, specifically expressed in the nervous system.

It localises to the membrane. Subunit of the V0 complex of vacuolar(H+)-ATPase (V-ATPase), a multisubunit enzyme composed of a peripheral complex (V1) that hydrolyzes ATP and a membrane integral complex (V0) that translocates protons. V-ATPase is responsible for acidifying and maintaining the pH of intracellular compartments and in some cell types, is targeted to the plasma membrane, where it is responsible for acidifying the extracellular environment. Required for assembly and activity of the vacuolar ATPase. Regulates the size of gut granules during embryonic development. In neurons, required for necrotic cell death by promoting intracellular acidification. Required for cell death induced by hypoxia. Required for acidification of synaptic vesicles and the release of neurotransmitters from adult neurons. This is V-type proton ATPase 116 kDa subunit a 1 from Caenorhabditis elegans.